We begin with the raw amino-acid sequence, 900 residues long: Protein translocase subunit SecA (900 aa).

ATP contacts are provided by residues glutamine 87, 105–109 (GEGKT), and aspartate 512. A disordered region spans residues 849 to 900 (ERLAQQQQFSHQEEDSLNTGSPAQADRKIGRNDPCPCGSGKKYKQCHGRLQK). Cysteine 883, cysteine 885, cysteine 894, and histidine 895 together coordinate Zn(2+). A compositionally biased stretch (basic residues) spans 889–900 (KKYKQCHGRLQK).

Belongs to the SecA family. In terms of assembly, monomer and homodimer. Part of the essential Sec protein translocation apparatus which comprises SecA, SecYEG and auxiliary proteins SecDF-YajC and YidC. Zn(2+) is required as a cofactor.

It localises to the cell inner membrane. Its subcellular location is the cytoplasm. It catalyses the reaction ATP + H2O + cellular proteinSide 1 = ADP + phosphate + cellular proteinSide 2.. Its function is as follows. Part of the Sec protein translocase complex. Interacts with the SecYEG preprotein conducting channel. Has a central role in coupling the hydrolysis of ATP to the transfer of proteins into and across the cell membrane, serving both as a receptor for the preprotein-SecB complex and as an ATP-driven molecular motor driving the stepwise translocation of polypeptide chains across the membrane. The polypeptide is Protein translocase subunit SecA (Pectobacterium atrosepticum (strain SCRI 1043 / ATCC BAA-672) (Erwinia carotovora subsp. atroseptica)).